Here is a 1015-residue protein sequence, read N- to C-terminus: DNA polymerase catalytic subunit (1015 aa).

Belongs to the DNA polymerase type-B family. Forms a complex with the major DNA-binding protein BALF2, the DNA polymerase processivity factor BMRF1, and the alkaline exonuclease BGLF5. Interacts with the putative helicase-primase complex composed of BBLF4, BSLF1 and BBLF2/3 proteins; these interactions may coordinate leading and lagging strand DNA synthesis at the replication fork.

It localises to the host nucleus. It catalyses the reaction DNA(n) + a 2'-deoxyribonucleoside 5'-triphosphate = DNA(n+1) + diphosphate. In terms of biological role, replicates viral genomic DNA in the late phase of lytic infection, producing long concatemeric DNA. The replication complex is composed of six viral proteins: the DNA polymerase, processivity factor, primase, primase-associated factor, helicase, and ssDNA-binding protein. This chain is DNA polymerase catalytic subunit, found in Homo sapiens (Human).